The sequence spans 310 residues: MRIVIALGGNALLRRGEPMTAENQRQNVRIACEQIAKIWPNNELVIAHGNGPQVGLLALQGAAYTDVPTYPLDVLGAETAGMIGYMIQQELGNLVPFEVPFATLLSQVEVDINDPAFKNPTKPIGPVYTKEEAERLAKEKNWSIAQDGDKYRRVVPSPLPKRIFEIRPVKWLLEKGSIVICAGGGGIPTYYDEHHNLQGVEAVIDKDLCSALLAENLDADLFIIATDVSATFVDWGKPNQKAISVASPEAISELGFASGSMGPKVQAAINFAKQTGKDAVIGSLSDIVDIVKGKAGTRITKKTEGISYYA.

It belongs to the carbamate kinase family. Homodimer.

It localises to the cytoplasm. The enzyme catalyses hydrogencarbonate + NH4(+) + ATP = carbamoyl phosphate + ADP + H2O + H(+). Its pathway is amino-acid degradation; L-arginine degradation via ADI pathway. The sequence is that of Carbamate kinase from Haemophilus influenzae (strain ATCC 51907 / DSM 11121 / KW20 / Rd).